The chain runs to 442 residues: Mannosylglycerate hydrolase (442 aa).

Substrate contacts are provided by residues tyrosine 38, 42 to 45 (WSWD), tyrosine 90, glutamine 116, and glycine 176. Aspartate 178 acts as the Proton donor in catalysis. Substrate is bound by residues arginine 213 and 369-370 (YW). The active-site Proton acceptor is glutamate 413.

Belongs to the glycosyl hydrolase 63 family. As to quaternary structure, homodimer in solution.

The catalysed reaction is (2R)-2-O-(alpha-D-mannosyl)-glycerate + H2O = D-mannose + (R)-glycerate. It carries out the reaction (2R)-2-O-(alpha-D-glucopyranosyl)-glycerate + H2O = (R)-glycerate + D-glucose. With respect to regulation, activity is not stimulated by divalent cations and not affected in the presence of EDTA. Functionally, hydrolase that catalyzes the hydrolysis of mannosylglycerate (MG), a solute produced in response to osmotic stress in thermophiles, into mannose and glycerate. Can also hydrolyze glucosylglycerate (GG) to glucose and glycerate, with similar catalytic efficiency. Is highly specific for MG and GG, and cannot use mannosylglyceramide (MGA), glucosylglycerol, mannosylglucosylglycerate (MGG), glucosylglucosylglycerate (GGG) or trehalose as substrates. This Rubrobacter radiotolerans (Arthrobacter radiotolerans) protein is Mannosylglycerate hydrolase.